The following is a 1055-amino-acid chain: Cellulose synthase A catalytic subunit 9 [UDP-forming] (1055 aa).

Topologically, residues 1–268 (MEASAGLVAG…ASSKVNPYRM (268 aa)) are cytoplasmic. Residues Cys37, Cys40, Cys56, Cys59, Cys64, Cys67, Cys79, and Cys82 each contribute to the Zn(2+) site. The segment at 37 to 83 (CEICGDEVGRTVDGDLFVACNECGFPVCRPCYEYERREGTQNCPQCK) adopts an RING-type; degenerate zinc-finger fold. The chain crosses the membrane as a helical span at residues 269–289 (VIILRLVVLGFFLRYRILHPV). The Extracellular portion of the chain corresponds to 290 to 291 (PD). Residues 292 to 312 (AIPLWLTSIICEIWFAVSWIL) traverse the membrane as a helical segment. The Cytoplasmic portion of the chain corresponds to 313–831 (DQFPKWYPID…LERFSYINTT (519 aa)). Residues Ser351, Lys357, Glu358, and Asp387 each contribute to the UDP-alpha-D-glucose site. The active site involves Asp387. Positions 439-468 (NFVQERRAMKREYEEFKVRINALVAKAQKV) form a coiled coil. Lys528 contributes to the UDP-alpha-D-glucose binding site. 2 residues coordinate Mn(2+): Lys529 and Asp553. Residue Asp753 is part of the active site. Residues 832–852 (IYPFTSLPLLAYCTLPAVCLL) traverse the membrane as a helical segment. Residues 853 to 860 (TGKFIMPP) are Extracellular-facing. A helical transmembrane segment spans residues 861–881 (ISTFASLFFIALFISIFATGI). Topologically, residues 882–899 (LEMRWSGVSIEEWWRNEQ) are cytoplasmic. The helical transmembrane segment at 900-920 (FWVIGGVSAHLFAVVQGLLKV) threads the bilayer. Residues 921 to 951 (LAGIDTNFTVTSKATGDEDDEFAELYAFKWT) lie on the Extracellular side of the membrane. The N-linked (GlcNAc...) asparagine glycan is linked to Asn927. Residues 952–972 (TLLIPPTTLLILNIIGVVAGV) traverse the membrane as a helical segment. At 973–983 (SDAINNGSEAW) the chain is on the cytoplasmic side. The helical transmembrane segment at 984 to 1004 (GPLFGKLFFAFWVIVHLYPFL) threads the bilayer. The Extracellular portion of the chain corresponds to 1005 to 1013 (KGLMGRQNR). A helical transmembrane segment spans residues 1014–1034 (TPTIVVIWSVLLASIFSLLWV). The Cytoplasmic segment spans residues 1035–1055 (RIDPFTIKARGPDVRQCGINC).

This sequence belongs to the glycosyltransferase 2 family. Plant cellulose synthase subfamily. The cofactor is Mn(2+). Requires Zn(2+) as cofactor.

Its subcellular location is the cell membrane. It catalyses the reaction [(1-&gt;4)-beta-D-glucosyl](n) + UDP-alpha-D-glucose = [(1-&gt;4)-beta-D-glucosyl](n+1) + UDP + H(+). It functions in the pathway glycan metabolism; plant cellulose biosynthesis. Catalytic subunit of cellulose synthase terminal complexes ('rosettes'), required for beta-1,4-glucan microfibril crystallization, a major mechanism of the cell wall formation. Involved in the secondary cell wall formation. The chain is Cellulose synthase A catalytic subunit 9 [UDP-forming] (CESA9) from Oryza sativa subsp. indica (Rice).